The chain runs to 693 residues: FAST kinase domain-containing protein 2, mitochondrial (693 aa).

2 positions are modified to phosphoserine: Ser110 and Ser124. The 58-residue stretch at 618 to 675 folds into the RAP domain; that stretch reads VAVLCVSRSAYCLGSSHPRGFLAMKMRHLNAMGFRVILVNNWEMDKLEMEDAVTFLKT. Ser692 carries the post-translational modification Phosphoserine.

It belongs to the FAST kinase family. As to quaternary structure, monomer. Found in a complex with GRSF1, DDX28, DHX30 and FASTKD5. Associates with the 16S mitochondrial rRNA (16S mt-rRNA). Forms a regulatory protein-RNA complex, consisting of RCC1L, NGRN, RPUSD3, RPUSD4, TRUB2, FASTKD2 and 16S mt-rRNA.

The protein localises to the mitochondrion matrix. The protein resides in the mitochondrion nucleoid. Functionally, plays an important role in assembly of the mitochondrial large ribosomal subunit. As a component of a functional protein-RNA module, consisting of RCC1L, NGRN, RPUSD3, RPUSD4, TRUB2, FASTKD2 and 16S mitochondrial ribosomal RNA (16S mt-rRNA), controls 16S mt-rRNA abundance and is required for intra-mitochondrial translation. May play a role in mitochondrial apoptosis. The protein is FAST kinase domain-containing protein 2, mitochondrial (FASTKD2) of Pongo abelii (Sumatran orangutan).